A 359-amino-acid chain; its full sequence is 3-isopropylmalate dehydrogenase (359 aa).

Substrate contacts are provided by Arg-96, Arg-106, Arg-134, and Asp-223. Mg(2+)-binding residues include Asp-223, Asp-247, and Asp-251. Position 281 to 293 (281 to 293) interacts with NAD(+); that stretch reads GSAPDIAGQGIAN.

It belongs to the isocitrate and isopropylmalate dehydrogenases family. LeuB type 1 subfamily. In terms of assembly, homodimer. Requires Mg(2+) as cofactor. It depends on Mn(2+) as a cofactor.

It is found in the cytoplasm. The catalysed reaction is (2R,3S)-3-isopropylmalate + NAD(+) = 4-methyl-2-oxopentanoate + CO2 + NADH. The protein operates within amino-acid biosynthesis; L-leucine biosynthesis; L-leucine from 3-methyl-2-oxobutanoate: step 3/4. Its function is as follows. Catalyzes the oxidation of 3-carboxy-2-hydroxy-4-methylpentanoate (3-isopropylmalate) to 3-carboxy-4-methyl-2-oxopentanoate. The product decarboxylates to 4-methyl-2 oxopentanoate. The protein is 3-isopropylmalate dehydrogenase of Chromohalobacter salexigens (strain ATCC BAA-138 / DSM 3043 / CIP 106854 / NCIMB 13768 / 1H11).